The sequence spans 364 residues: Zinc finger protein 474 (364 aa).

A compositionally biased stretch (basic residues) spans 1 to 10 (MERGKKKRIS). Disordered regions lie at residues 1–21 (MERG…HHSK) and 37–60 (SYSS…DTQK). The segment at 93–122 (GFRVCYICGREFGSQSIAIHEPQCLQKWHI) adopts a C2HC/C3H-type 1 zinc-finger fold. Residues Cys97, Cys100, His112, and Cys116 each contribute to the Zn(2+) site. The segment at 127–147 (LPKHLRRPEPSKPQSLSSSGS) is disordered. The segment covering 138–147 (KPQSLSSSGS) has biased composition (low complexity). 3 C2HC/C3H-type zinc fingers span residues 164-193 (QLLP…KGEG), 220-249 (RTVI…KWKM), and 283-312 (QLVF…HPYG). Positions 168, 171, 183, 187, 224, 227, 239, 243, 287, 290, 302, and 306 each coordinate Zn(2+). The segment at 187–214 (CKPKGEGPRAPHSNSSDHLTGLKKACSG) is disordered.

Zn(2+) is required as a cofactor.

The protein is Zinc finger protein 474 (ZNF474) of Homo sapiens (Human).